The chain runs to 119 residues: FAD-linked sulfhydryl oxidase (119 aa).

An ERV/ALR sulfhydryl oxidase domain is found at 1 to 97 (MLHWGPKFWR…ISWSEYKNIY (97 aa)). Cys-44 and Cys-47 are joined by a disulfide.

Belongs to the asfivirus B119L family. In terms of assembly, interacts with A151R. Requires FAD as cofactor.

Its subcellular location is the host cytoplasm. It localises to the virion. The enzyme catalyses 2 R'C(R)SH + O2 = R'C(R)S-S(R)CR' + H2O2. Functionally, FAD-dependent sulfhydryl oxidase that catalyzes the formation of disulfide bonds in viral proteins produced in the cell cytoplasm. This Ornithodoros (relapsing fever ticks) protein is FAD-linked sulfhydryl oxidase.